The following is a 66-amino-acid chain: Large ribosomal subunit protein bL32 (66 aa).

The span at 1 to 18 shows a compositional bias: basic residues; it reads MAIVPKRKTSKQRKHKRR. Residues 1–21 form a disordered region; sequence MAIVPKRKTSKQRKHKRRTND.

Belongs to the bacterial ribosomal protein bL32 family.

The protein is Large ribosomal subunit protein bL32 of Mycoplasmopsis agalactiae (strain NCTC 10123 / CIP 59.7 / PG2) (Mycoplasma agalactiae).